The chain runs to 689 residues: Shutoff protein (689 aa).

Positions 1–24 are disordered; that stretch reads MSEEPVSGTTVEIEEDTHTPPNSP. A binding to host EIF4G region spans residues 226–289; it reads VMNNLLVKRA…SVLVTVVLEC (64 aa). In terms of domain architecture, RRM spans 292–410; it reads RLFTSKDMVK…PLYTETSQRL (119 aa). Phosphotyrosine; by host is present on residues tyrosine 309 and tyrosine 627. A disordered region spans residues 625-689; it reads GQYLDPHTGE…GEPDVRGTTS (65 aa). The span at 645-655 shows a compositional bias: basic and acidic residues; sequence SGHEFQGDGRH. A compositionally biased stretch (basic residues) spans 656–675; sequence REPKRGRHFRQRGGPRKPPR. Positions 678–689 are enriched in basic and acidic residues; that stretch reads AGGEPDVRGTTS.

It belongs to the adenoviridae shutoff protein family. As to quaternary structure, monomer. Interacts with hexon protein; this interaction allows chaperoning and trimerization of hexon proteins. Interacts (via N-terminus) with host initiation factor EIF4G (via C-terminus). Interacts (via RRM domain) with viral mRNAs that contain the tripartite leader; this interaction allows ribosome shunting and expression of viral late mRNAs. Post-translationally, might be cleaved by the viral protease. Phosphorylated. Tyrosine phosphorylation enhances preferential binding to tripartite leader mRNAs and allows ribosome shunting. In terms of processing, methylated. Asymmetric dimethylation by host PRMT1 of the Arg/Gly-rich region may regulate shutoff protein binding to hexon and promote the capsid assembly in the nucleus.

The protein localises to the host cytoplasm. Its function is as follows. Protein that inhibits host translation while promoting late viral translation by ribosome shunting. Blocks host cap-dependent translation by binding to eIF4G, displacing MKNK1 from cap initiation complexes and preventing EIF4E phosphorylation. Binds to the tripartite leader sequence of viral late mRNAs and recruits host eIF4G, PABPC1/poly-A binding protein and 40S ribosomes subunits on viral mRNAs, allowing ribosome shunting and efficient translation of late viral mRNAs even though conventional translation via ribosome scanning from the cap has been shut off in the host cell. During assembly, acts as a chaperone protein that helps hexon proteins assembly into trimers. This chain is Shutoff protein, found in Canis lupus familiaris (Dog).